Here is a 442-residue protein sequence, read N- to C-terminus: tRNA-2-methylthio-N(6)-dimethylallyladenosine synthase (442 aa).

The MTTase N-terminal domain occupies 5–122 (KKVFIKTLGC…LPEMIKRKQS (118 aa)). [4Fe-4S] cluster-binding residues include Cys-14, Cys-51, Cys-85, Cys-159, Cys-163, and Cys-166. Residues 145-378 (KAEGAKAYVS…DLLNSNAQII (234 aa)) enclose the Radical SAM core domain. One can recognise a TRAM domain in the interval 380 to 442 (RQMVGTEQRI…LPNSLRGELI (63 aa)).

The protein belongs to the methylthiotransferase family. MiaB subfamily. In terms of assembly, monomer. [4Fe-4S] cluster serves as cofactor.

It localises to the cytoplasm. The catalysed reaction is N(6)-dimethylallyladenosine(37) in tRNA + (sulfur carrier)-SH + AH2 + 2 S-adenosyl-L-methionine = 2-methylsulfanyl-N(6)-dimethylallyladenosine(37) in tRNA + (sulfur carrier)-H + 5'-deoxyadenosine + L-methionine + A + S-adenosyl-L-homocysteine + 2 H(+). Functionally, catalyzes the methylthiolation of N6-(dimethylallyl)adenosine (i(6)A), leading to the formation of 2-methylthio-N6-(dimethylallyl)adenosine (ms(2)i(6)A) at position 37 in tRNAs that read codons beginning with uridine. This is tRNA-2-methylthio-N(6)-dimethylallyladenosine synthase from Francisella philomiragia subsp. philomiragia (strain ATCC 25017 / CCUG 19701 / FSC 153 / O#319-036).